Here is a 350-residue protein sequence, read N- to C-terminus: Nuclear pore complex-interacting protein family member A3 (350 aa).

A disordered region spans residues 306–325 (KTPPECLLTPLPPSAPPSVD).

This sequence belongs to the NPIP family.

This chain is Nuclear pore complex-interacting protein family member A3 (NPIPA3), found in Homo sapiens (Human).